The chain runs to 403 residues: Dynactin subunit 2-A (403 aa).

A disordered region spans residues 1–26; it reads MADPKYADLPGIARNEPDVYETSDLP. A coiled-coil region spans residues 99 to 132; the sequence is PQQKYQRLLHEVQELTQEVEKTQSTVKESAAEEK. The segment at 183-203 is disordered; that stretch reads AAKTRKNPEGKSPAKGPGPDT. A coiled-coil region spans residues 381-401; it reads KENLATVEDNFSNIDGRIKKL.

Belongs to the dynactin subunit 2 family. Subunit of dynactin, a multiprotein complex part of a tripartite complex with dynein and a adapter, such as BICDL1, BICD2 or HOOK3. The dynactin complex is built around ACTR1A/ACTB filament and consists of an actin-related filament composed of a shoulder domain, a pointed end and a barbed end. Its length is defined by its flexible shoulder domain. The soulder is composed of 2 DCTN1 subunits, 4 DCTN2 and 2 DCTN3.

The protein resides in the cytoplasm. It is found in the cytoskeleton. The protein localises to the microtubule organizing center. It localises to the centrosome. Its subcellular location is the membrane. Its function is as follows. Part of the dynactin complex that activates the molecular motor dynein for ultra-processive transport along microtubules. In the dynactin soulder domain, binds the ACTR1A filament and acts as a molecular ruler to determine the length. Modulates cytoplasmic dynein binding to an organelle, and plays a role in prometaphase chromosome alignment and spindle organization during mitosis. Involved in anchoring microtubules to centrosomes. This Xenopus laevis (African clawed frog) protein is Dynactin subunit 2-A (dctn2-a).